Consider the following 501-residue polypeptide: Beta-secretase 1 (501 aa).

The signal sequence occupies residues 1–21; it reads MAPALHWLLLWVGSGMLPAQG. Residues 22–45 constitute a propeptide that is removed on maturation; it reads THLGIRLPLRSGLAGPPLGLRLPR. At 22-457 the chain is on the extracellular side; sequence THLGIRLPLR…PQTDESTLMT (436 aa). The tract at residues 39–58 is disordered; sequence LGLRLPRETDEESEEPGRRG. The Peptidase A1 domain maps to 75–416; sequence YYVEMTVGSP…DRARKRIGFA (342 aa). Aspartate 93 is an active-site residue. Lysine 126 carries the post-translational modification N6-acetyllysine. 3 N-linked (GlcNAc...) asparagine glycosylation sites follow: asparagine 153, asparagine 172, and asparagine 223. 3 disulfides stabilise this stretch: cysteine 216/cysteine 420, cysteine 278/cysteine 443, and cysteine 330/cysteine 380. Residues lysine 275, lysine 279, and lysine 285 each carry the N6-acetyllysine modification. Residue aspartate 289 is part of the active site. Lysine 299, lysine 300, and lysine 307 each carry N6-acetyllysine. Asparagine 354 is a glycosylation site (N-linked (GlcNAc...) asparagine). Residues 458 to 478 traverse the membrane as a helical segment; that stretch reads IAYVMAAICALFMLPLCLMVC. S-palmitoyl cysteine attachment occurs at residues cysteine 474, cysteine 478, cysteine 482, and cysteine 485. At 479 to 501 the chain is on the cytoplasmic side; the sequence is QWRCLRCLRHQHDDFADDISLLK. Positions 479–501 are interaction with RTN3; sequence QWRCLRCLRHQHDDFADDISLLK. A DXXLL motif is present at residues 496–500; that stretch reads DISLL. Serine 498 carries the phosphoserine modification. A Glycyl lysine isopeptide (Lys-Gly) (interchain with G-Cter in ubiquitin) cross-link involves residue lysine 501.

The protein belongs to the peptidase A1 family. In terms of assembly, monomer. Interacts (via DXXLL motif) with GGA1, GGA2 and GGA3 (via their VHS domain); the interaction highly increases when BACE1 is phosphorylated at Ser-498. Interacts with RTN1; RTN2; RTN3 and RTN4; the interaction leads to inhibition of amyloid precursor protein processing. Interacts with SNX6. Interacts with PCSK9. Interacts with NAT8 and NAT8B. Interacts with BIN1. Interacts (via extracellular domain) with ADAM10 (via extracellular domain). Interacts with SORL1; this interaction may affect binding with APP and hence reduce APP cleavage. Interacts with NRDC AND NRG1. N-Glycosylated. Addition of a bisecting N-acetylglucosamine by MGAT3 blocks lysosomal targeting, further degradation and is required for maintaining stability under stress conditions. In terms of processing, palmitoylation mediates lipid raft localization. Post-translationally, acetylated in the endoplasmic reticulum at Lys-126, Lys-275, Lys-279, Lys-285, Lys-299, Lys-300 and Lys-307. Acetylation by NAT8 and NAT8B is transient and deacetylation probably occurs in the Golgi. Acetylation regulates the maturation, the transport to the plasma membrane, the stability and the expression of the protein. Ubiquitinated at Lys-501, ubiquitination leads to lysosomal degradation. Monoubiquitinated and 'Lys-63'-linked polyubitinated. Deubiquitnated by USP8; inhibits lysosomal degradation. In terms of processing, phosphorylation at Ser-498 is required for interaction with GGA1 and retrograded transport from endosomal compartments to the trans-Golgi network. Non-phosphorylated BACE1 enters a direct recycling route to the cell surface. Expressed in the brain, specifically in neurons and astrocytes (at protein level).

It localises to the cell membrane. It is found in the golgi apparatus. The protein localises to the trans-Golgi network. The protein resides in the endoplasmic reticulum. Its subcellular location is the endosome. It localises to the late endosome. It is found in the early endosome. The protein localises to the cell surface. The protein resides in the cytoplasmic vesicle membrane. Its subcellular location is the membrane raft. It localises to the lysosome. It is found in the recycling endosome. The protein localises to the cell projection. The protein resides in the axon. Its subcellular location is the dendrite. The catalysed reaction is Broad endopeptidase specificity. Cleaves Glu-Val-Asn-Leu-|-Asp-Ala-Glu-Phe in the Swedish variant of Alzheimer's amyloid precursor protein.. Inhibited by RTN3 and RTN4. Functionally, responsible for the proteolytic processing of the amyloid precursor protein (APP). Cleaves at the N-terminus of the A-beta peptide sequence, between residues 671 and 672 of APP, leads to the generation and extracellular release of beta-cleaved soluble APP, and a corresponding cell-associated C-terminal fragment which is later released by gamma-secretase. Cleaves CHL1. The polypeptide is Beta-secretase 1 (Mus musculus (Mouse)).